Here is a 191-residue protein sequence, read N- to C-terminus: UPF0312 protein Sputcn32_2702 (191 aa).

Positions 1 to 22 (MKKQLLSALIGVSLLAPMAASA) are cleaved as a signal peptide.

The protein belongs to the UPF0312 family. Type 1 subfamily.

It localises to the periplasm. The polypeptide is UPF0312 protein Sputcn32_2702 (Shewanella putrefaciens (strain CN-32 / ATCC BAA-453)).